A 900-amino-acid polypeptide reads, in one-letter code: Bifunctional uridylyltransferase/uridylyl-removing enzyme (900 aa).

The interval 1–342 is uridylyltransferase; sequence MPQVDPELFD…PCEQPVQIQP (342 aa). Residues 343–705 form a uridylyl-removing region; sequence LNSRFQLRDG…TTQREFESGS (363 aa). In terms of domain architecture, HD spans 461–583; sequence VDAHTLNLIK…VGDQTHLDYL (123 aa). ACT domains follow at residues 706–789 and 816–891; these read QIFI…IIQR and VLEV…DNGR.

This sequence belongs to the GlnD family. The cofactor is Mg(2+).

The catalysed reaction is [protein-PII]-L-tyrosine + UTP = [protein-PII]-uridylyl-L-tyrosine + diphosphate. It catalyses the reaction [protein-PII]-uridylyl-L-tyrosine + H2O = [protein-PII]-L-tyrosine + UMP + H(+). With respect to regulation, uridylyltransferase (UTase) activity is inhibited by glutamine, while glutamine activates uridylyl-removing (UR) activity. Modifies, by uridylylation and deuridylylation, the PII regulatory proteins (GlnB and homologs), in response to the nitrogen status of the cell that GlnD senses through the glutamine level. Under low glutamine levels, catalyzes the conversion of the PII proteins and UTP to PII-UMP and PPi, while under higher glutamine levels, GlnD hydrolyzes PII-UMP to PII and UMP (deuridylylation). Thus, controls uridylylation state and activity of the PII proteins, and plays an important role in the regulation of nitrogen assimilation and metabolism. The sequence is that of Bifunctional uridylyltransferase/uridylyl-removing enzyme from Pseudomonas aeruginosa (strain LESB58).